The following is an 830-amino-acid chain: MHYDFKEVERDVQEKWDFTVNVKDVQCYVLEMFPYPSGNIHMGHLRNYTIGDVIARYKRACGLHVFHPIGWDAFGLPAENAALSYNISPQVWTRKNIDNMRSQLKSIGLSYNWDKEFATCDAEYYKYEQEFFLDFLKYGLAYRKESLVNWDPVDQTVLANEQVIDGRGWRSGAIIEKRKLSQWFLKITDFAAELLDDLKSLNQWPEKVKLMQERWIGKSEGVIIDFQIVGINEVLQVFTTSPHTLFGASFIAVSFDHPILKYVNDVQLIQLIDSFDRKDLIDDSSINTVEKFGINSGLVAKHPLLDMDLPIYVANFVLMNYGTGAVFCCPAHDQRDFDFAKKYSLPIRQVIFPEQNVDLEREAYVGSGIMGCSGFLDGMTVDDAKKSMIEKLISLGICKKQVYYRLHDWGISRQRYWGCPIPIIYCKKCGIVPVDKKDLPITLPEDIDFTKSGNPLDNHPTWKYTKCPSCGADAKRETDTFDTFFESSWYFAAFCGIGKGIDKDVCNKLLPVDYYIGGIEHAVLHLLYSRFFCRALTRCGYFDVKEPFSSLITQGMVCHSTYLDKYGNYLFPEDGKKMIQEGKYVTVGRAEKMSKSKKNVVHLDDIIDKYGADSARLFILSDTPPERDIEWLDENIEGVSRYLNKLWKMIVDYDQIEQNFVFNDISNDAVEYRMNVHKILNDITNDLEFYRFNCAVAKFRELSNVISEMIRLSINHHVVSEAIYILIRVVEPFIPHIAEKLWQIVGGQGMLCNQLWPKVDSQLLIKKNVNIVVQVNGKFIKAVSVPNDIDDDTLKSIALEVAQRRIGNSSVKNIYIIPARVINIVITKSS.

The 'HIGH' region motif lies at 34 to 44 (PYPSGNIHMGH). The short motif at 592-596 (KMSKS) is the 'KMSKS' region element. K595 is an ATP binding site.

The protein belongs to the class-I aminoacyl-tRNA synthetase family.

The protein localises to the cytoplasm. It catalyses the reaction tRNA(Leu) + L-leucine + ATP = L-leucyl-tRNA(Leu) + AMP + diphosphate. This Ehrlichia ruminantium (strain Gardel) protein is Leucine--tRNA ligase.